Consider the following 875-residue polypeptide: Alanine--tRNA ligase (875 aa).

His564, His568, Cys666, and His670 together coordinate Zn(2+).

It belongs to the class-II aminoacyl-tRNA synthetase family. In terms of assembly, homotetramer. The cofactor is Zn(2+).

The protein localises to the cytoplasm. The enzyme catalyses tRNA(Ala) + L-alanine + ATP = L-alanyl-tRNA(Ala) + AMP + diphosphate. Functionally, catalyzes the attachment of alanine to tRNA(Ala) in a two-step reaction: alanine is first activated by ATP to form Ala-AMP and then transferred to the acceptor end of tRNA(Ala). Also edits incorrectly charged Ser-tRNA(Ala) and Gly-tRNA(Ala) via its editing domain. The protein is Alanine--tRNA ligase of Serratia proteamaculans (strain 568).